A 353-amino-acid polypeptide reads, in one-letter code: MKSMPFAPIADLRVAQLIDANLDRAREGLRVVEDWCRFGLDREELVMTLKDWRQRLGRHHHDSYKQARSTATDQGIGLSHPAQQERHEPWHVVAANCARVQEALRVLEEFARQPDPQLAASAAAIRYGLYDLEVTVLQANAGKKRRQQLQDCHLCLITTSQSDLNSNDLLRTVNAALVAGIDMVQYRNKEASDLQRLTQAKELASLCRKHGALFIVNDRIDLALAVDADGVHLGQDDLPTDVARRLIGSERLLGRSTQFLAQLQKAEAEGCDYLGVGPVNSTATKPERQPIGLAYVKEASKATQLPWFAIGGINISNLEALRQAGAKRIAVIGAIMNSKDPAATSLQLLEALR.

A unknown region spans residues 1-128 (MKSMPFAPIA…AASAAAIRYG (128 aa)). A thiamine-phosphate synthase region spans residues 129–353 (LYDLEVTVLQ…TSLQLLEALR (225 aa)). Residues 185–189 (QYRNK) and Asn-217 contribute to the 4-amino-2-methyl-5-(diphosphooxymethyl)pyrimidine site. Residues Asp-218 and Asp-237 each contribute to the Mg(2+) site. Ser-256 lines the 4-amino-2-methyl-5-(diphosphooxymethyl)pyrimidine pocket. 282–284 (TAT) is a 2-[(2R,5Z)-2-carboxy-4-methylthiazol-5(2H)-ylidene]ethyl phosphate binding site. Lys-285 provides a ligand contact to 4-amino-2-methyl-5-(diphosphooxymethyl)pyrimidine. 2-[(2R,5Z)-2-carboxy-4-methylthiazol-5(2H)-ylidene]ethyl phosphate is bound at residue Gly-312.

The protein belongs to the thiamine-phosphate synthase family. Mg(2+) serves as cofactor.

The catalysed reaction is 2-[(2R,5Z)-2-carboxy-4-methylthiazol-5(2H)-ylidene]ethyl phosphate + 4-amino-2-methyl-5-(diphosphooxymethyl)pyrimidine + 2 H(+) = thiamine phosphate + CO2 + diphosphate. It carries out the reaction 2-(2-carboxy-4-methylthiazol-5-yl)ethyl phosphate + 4-amino-2-methyl-5-(diphosphooxymethyl)pyrimidine + 2 H(+) = thiamine phosphate + CO2 + diphosphate. It catalyses the reaction 4-methyl-5-(2-phosphooxyethyl)-thiazole + 4-amino-2-methyl-5-(diphosphooxymethyl)pyrimidine + H(+) = thiamine phosphate + diphosphate. The protein operates within cofactor biosynthesis; thiamine diphosphate biosynthesis; thiamine phosphate from 4-amino-2-methyl-5-diphosphomethylpyrimidine and 4-methyl-5-(2-phosphoethyl)-thiazole: step 1/1. Its function is as follows. Condenses 4-methyl-5-(beta-hydroxyethyl)thiazole monophosphate (THZ-P) and 2-methyl-4-amino-5-hydroxymethyl pyrimidine pyrophosphate (HMP-PP) to form thiamine monophosphate (TMP). The chain is Thiamine-phosphate synthase from Prochlorococcus marinus (strain MIT 9313).